The sequence spans 534 residues: Pentatricopeptide repeat-containing protein At5g50990 (534 aa).

PPR repeat units follow at residues 128 to 158 (NVITWNLMIGGYVRNVQYEEALKALKNMLSF), 164 to 198 (NKFSFASSLAACARLGDLHHAKWVHSLMIDSGIEL), 199 to 229 (NAILSSALVDVYAKCGDIGTSREVFYSVKRN), 230 to 264 (DVSIWNAMITGFATHGLATEAIRVFSEMEAEHVSP), 265 to 295 (DSITFLGLLTTCSHCGLLEEGKEYFGLMSRR), and 301 to 331 (KLEHYGAMVDLLGRAGRVKEAYELIESMPIE). Residues 336-408 (IWRSLLSSSR…AKGKSWLEFG (73 aa)) form a type E motif region. Positions 409 to 439 (GMIHRFKAGDTSHIETKAIYKVLEGLIQKTK) are type E(+) motif. Positions 440-534 (SQGFVSDTDL…DGLCSCRDYW (95 aa)) are type DYW motif.

It belongs to the PPR family. PCMP-H subfamily.

This chain is Pentatricopeptide repeat-containing protein At5g50990 (PCMP-H59), found in Arabidopsis thaliana (Mouse-ear cress).